The chain runs to 205 residues: CASP-like protein 0U1 (205 aa).

Over 1–38 the chain is Cytoplasmic; it reads MDDAPGASDEAREPLLKRVGASVEGTSLMNHRLMKNPK. A helical transmembrane segment spans residues 39–57; sequence FRALLVESLMALTTFSFMA. The Extracellular portion of the chain corresponds to 58–89; that stretch reads KQTEGLAGPELSTLNDCGEAGCGFTKFYQFKG. Residues 90–110 traverse the membrane as a helical segment; sequence VVGVYAGFWAYTVILIAMYVI. The Cytoplasmic portion of the chain corresponds to 111–124; sequence RKAPPPGTEFASYA. Residues 125–145 traverse the membrane as a helical segment; sequence LFTAAMATFVVMSITECASVV. The Extracellular portion of the chain corresponds to 146–159; sequence LSSDYYVCKNADYS. The chain crosses the membrane as a helical span at residues 160–180; the sequence is LVSLIFAAATIVLNCLTCAFA. The Cytoplasmic portion of the chain corresponds to 181–205; the sequence is WRQWGELKFVGLPKTLSALTETYPG.

The protein belongs to the Casparian strip membrane proteins (CASP) family. Homodimer and heterodimers.

It localises to the cell membrane. The chain is CASP-like protein 0U1 from Ostreococcus lucimarinus (strain CCE9901).